A 202-amino-acid polypeptide reads, in one-letter code: Nucleoside triphosphate pyrophosphatase (202 aa).

The Proton acceptor role is filled by D79.

The protein belongs to the Maf family. It depends on a divalent metal cation as a cofactor.

It is found in the cytoplasm. It carries out the reaction a ribonucleoside 5'-triphosphate + H2O = a ribonucleoside 5'-phosphate + diphosphate + H(+). The enzyme catalyses a 2'-deoxyribonucleoside 5'-triphosphate + H2O = a 2'-deoxyribonucleoside 5'-phosphate + diphosphate + H(+). In terms of biological role, nucleoside triphosphate pyrophosphatase. May have a dual role in cell division arrest and in preventing the incorporation of modified nucleotides into cellular nucleic acids. The chain is Nucleoside triphosphate pyrophosphatase from Bradyrhizobium diazoefficiens (strain JCM 10833 / BCRC 13528 / IAM 13628 / NBRC 14792 / USDA 110).